We begin with the raw amino-acid sequence, 394 residues long: Endothelial cell-selective adhesion molecule (394 aa).

An N-terminal signal peptide occupies residues 1–29; the sequence is MILQAGTPETSLLRVLFLGLSTLAAFSRA. At 30–251 the chain is on the extracellular side; sequence QMELHVPPGL…LDVMTGSKAA (222 aa). The Ig-like V-type domain occupies 37-146; sequence PGLNKLEAVE…EGKSIGHSIK (110 aa). Residues asparagine 111, asparagine 172, asparagine 216, and asparagine 239 are each glycosylated (N-linked (GlcNAc...) asparagine). Positions 159–243 constitute an Ig-like C2-type domain; sequence PSCSLQGVPY…GFAKCNVTLD (85 aa). Cysteine 177 and cysteine 227 form a disulfide bridge. The chain crosses the membrane as a helical span at residues 252–272; the sequence is VVAGAVVGTFVGLVLIAGLVL. At 273 to 394 the chain is on the cytoplasmic side; the sequence is LYQRRSKTLE…PAQSQAGSLV (122 aa). At serine 304 the chain carries Phosphoserine. Polar residues-rich tracts occupy residues 304–318 and 335–347; these read SDTI…SVTS and FTPT…QALS. Positions 304-372 are disordered; sequence SDTISKNGTL…SLTPGGVSSS (69 aa). 2 positions are modified to phosphothreonine: threonine 336 and threonine 338. Phosphoserine occurs at positions 340, 343, 348, and 375.

Interacts with MAGI1. As to expression, highly expressed in the heart and lung. Weakly expressed in the kidney and skin. Expression is restricted to the vascular endothelial cells. Expressed in the kidney, heart and tongue (at protein level). Also expressed on megakaryocytes and activated platelets.

It localises to the cell junction. It is found in the adherens junction. The protein resides in the tight junction. Its subcellular location is the cell membrane. In terms of biological role, can mediate aggregation most likely through a homophilic molecular interaction. The polypeptide is Endothelial cell-selective adhesion molecule (Esam) (Mus musculus (Mouse)).